The following is a 138-amino-acid chain: ATP synthase epsilon chain, chloroplastic (138 aa).

It belongs to the ATPase epsilon chain family. F-type ATPases have 2 components, CF(1) - the catalytic core - and CF(0) - the membrane proton channel. CF(1) has five subunits: alpha(3), beta(3), gamma(1), delta(1), epsilon(1). CF(0) has three main subunits: a, b and c.

It localises to the plastid. Its subcellular location is the chloroplast thylakoid membrane. In terms of biological role, produces ATP from ADP in the presence of a proton gradient across the membrane. The protein is ATP synthase epsilon chain, chloroplastic of Huperzia lucidula (Shining clubmoss).